We begin with the raw amino-acid sequence, 387 residues long: 8-amino-7-oxononanoate synthase (387 aa).

Pyridoxal 5'-phosphate is bound at residue 109–110 (GY). Residue histidine 134 coordinates substrate. Positions 182, 214, and 242 each coordinate pyridoxal 5'-phosphate. Lysine 245 carries the post-translational modification N6-(pyridoxal phosphate)lysine. Threonine 359 contributes to the substrate binding site.

This sequence belongs to the class-II pyridoxal-phosphate-dependent aminotransferase family. BioF subfamily. Homodimer. Pyridoxal 5'-phosphate is required as a cofactor.

It carries out the reaction 6-carboxyhexanoyl-[ACP] + L-alanine + H(+) = (8S)-8-amino-7-oxononanoate + holo-[ACP] + CO2. The protein operates within cofactor biosynthesis; biotin biosynthesis. Catalyzes the decarboxylative condensation of pimeloyl-[acyl-carrier protein] and L-alanine to produce 8-amino-7-oxononanoate (AON), [acyl-carrier protein], and carbon dioxide. The chain is 8-amino-7-oxononanoate synthase from Haemophilus ducreyi (strain 35000HP / ATCC 700724).